The primary structure comprises 1829 residues: Protein TIC 214 (1829 aa).

The next 6 membrane-spanning stretches (helical) occupy residues 18–38 (IINS…FSIG), 67–87 (FIAG…HLAL), 90–110 (PHTI…WNNP), 127–147 (LSIQ…HFLL), 174–194 (FVGW…VLVW), and 224–244 (IFSI…PSPI). The segment covering 260–272 (RDVEIEKTFERGG) has biased composition (basic and acidic residues). Positions 260 to 301 (RDVEIEKTFERGGTKQGQEVSAEEDPSPSLFSEEKEDPDKIE) are disordered.

It belongs to the TIC214 family. Part of the Tic complex.

It is found in the plastid. The protein resides in the chloroplast inner membrane. In terms of biological role, involved in protein precursor import into chloroplasts. May be part of an intermediate translocation complex acting as a protein-conducting channel at the inner envelope. This Citrus sinensis (Sweet orange) protein is Protein TIC 214.